A 316-amino-acid chain; its full sequence is Ribosomal RNA small subunit methyltransferase H (316 aa).

Residues 35-37 (AGH), Asp55, Phe84, Asp105, and Gln112 each bind S-adenosyl-L-methionine.

Belongs to the methyltransferase superfamily. RsmH family.

The protein localises to the cytoplasm. It carries out the reaction cytidine(1402) in 16S rRNA + S-adenosyl-L-methionine = N(4)-methylcytidine(1402) in 16S rRNA + S-adenosyl-L-homocysteine + H(+). Specifically methylates the N4 position of cytidine in position 1402 (C1402) of 16S rRNA. The chain is Ribosomal RNA small subunit methyltransferase H from Streptococcus suis (strain 05ZYH33).